The sequence spans 186 residues: Protein FAM9B (186 aa).

A disordered region spans residues 1–93; sequence MAAWGKKHAG…KHALRKKQLK (93 aa). 2 stretches are compositionally biased toward basic and acidic residues: residues 10-27 and 34-58; these read GKDPVRDECEERNRFTET and DEHGEREPFAETDEHTGANTKKPED. The segment covering 66 to 93 has biased composition (basic residues); that stretch reads KRKRMKMDKTCSKTKNKSKHALRKKQLK.

This sequence belongs to the XLR/SYCP3 family. As to expression, expressed in testis and ovary (at protein level).

The protein resides in the nucleus. It localises to the cytoplasm. Its subcellular location is the chromosome. In terms of biological role, may play a role in meiosis. This Homo sapiens (Human) protein is Protein FAM9B.